The sequence spans 467 residues: Tel2-interacting protein 2 (467 aa).

A coiled-coil region spans residues 4 to 45 (YKELARRLHTLQSKNEKEALEKQIDFLDKLVVEVDSLVHEQD).

Belongs to the TTI2 family. In terms of assembly, component of the TTT complex composed of tel2, tti1 and tti2. Interacts with tel2 and ttiI1. Component of the ASTRA complex composed of at least rvb1, rvb2, tra1, tel2, tti1 and tti2.

It is found in the nucleus. Component of the tel2-tti1-tti2 (TTT) complex that stabilizes protein levels of the phosphatidylinositol 3-kinase-related protein kinase (PIKK) family proteins. The TTT complex is involved in the cellular resistance to DNA damage stresses, like ionizing radiation (IR), ultraviolet (UV) and mitomycin C (MMC). Component of the ASTRA complex involved in chromatin remodeling. This Schizosaccharomyces pombe (strain 972 / ATCC 24843) (Fission yeast) protein is Tel2-interacting protein 2.